We begin with the raw amino-acid sequence, 157 residues long: Ubiquitin-like protein 4A (157 aa).

The 76-residue stretch at 1–76 folds into the Ubiquitin-like domain; that stretch reads MQLTVKALQG…LNLVVKPLEK (76 aa). Residue Lys-48 forms a Glycyl lysine isopeptide (Lys-Gly) (interchain with G-Cter in ubiquitin) linkage. At Ser-90 the chain carries Phosphoserine. The interval 96–138 is required and sufficient for interaction with BAG6; sequence WQLISKVLARHFSAADASRVLEQLQRDYERSLSRLTLDDIERL.

Component of the BAG6/BAT3 complex, at least composed of BAG6, UBL4A and GET4/TRC35. Interacts with BAG6; the interaction is direct and required for UBL4A protein stability. Interacts with USP13; may be indirect via BAG6. Post-translationally, polyubiquitinated. Ubiquitination by AMFR and deubiquitination by USP13 may regulate the interaction between the BAG6/BAT3 complex and SGTA and therefore may regulate client proteins fate.

It localises to the cytoplasm. The protein localises to the cytosol. It is found in the nucleus. Its function is as follows. As part of a cytosolic protein quality control complex, the BAG6/BAT3 complex, maintains misfolded and hydrophobic patches-containing proteins in a soluble state and participates in their proper delivery to the endoplasmic reticulum or alternatively can promote their sorting to the proteasome where they undergo degradation. The BAG6/BAT3 complex is involved in the post-translational delivery of tail-anchored/type II transmembrane proteins to the endoplasmic reticulum membrane. Recruited to ribosomes, it interacts with the transmembrane region of newly synthesized tail-anchored proteins and together with SGTA and ASNA1 mediates their delivery to the endoplasmic reticulum. Client proteins that cannot be properly delivered to the endoplasmic reticulum are ubiquitinated and sorted to the proteasome. Similarly, the BAG6/BAT3 complex also functions as a sorting platform for proteins of the secretory pathway that are mislocalized to the cytosol either delivering them to the proteasome for degradation or to the endoplasmic reticulum. The BAG6/BAT3 complex also plays a role in the endoplasmic reticulum-associated degradation (ERAD), a quality control mechanism that eliminates unwanted proteins of the endoplasmic reticulum through their retrotranslocation to the cytosol and their targeting to the proteasome. It maintains these retrotranslocated proteins in an unfolded yet soluble state condition in the cytosol to ensure their proper delivery to the proteasome. The protein is Ubiquitin-like protein 4A of Homo sapiens (Human).